A 291-amino-acid chain; its full sequence is MWEAIISFFLTSVLSVFAKKTEFLDRPDSRKSHGRAVPPVGGVSIFLTLLIFERDNPFFLFSIPLFLLGLLDDLFDLSYRIKLAVTALVAVWFSTAVTIEVSIFGARIHPVFFVIWFVGMVNAFNVVDGLDGLLSGISLFSSLMIGERSLAFSIIGFLPWNLPDAKVFLGNSGSFLLGAYLSTASVVFFEGDLGYATLFLGFPFYEIVFSFVRRLVVKKNPFSPDEKHTHHVFSRKIGKWKTLLILVSFSLMFNLLGLSQKFYFIFLYVVLCCVLLFTYCVLQRGNGNLKL.

A run of 10 helical transmembrane segments spans residues 4 to 24 (AIIS…TEFL), 32 to 52 (SHGR…LLIF), 57 to 77 (PFFL…LFDL), 84 to 104 (AVTA…VSIF), 110 to 130 (PVFF…VDGL), 138 to 160 (SLFS…FLPW), 167 to 189 (VFLG…VVFF), 194 to 216 (GYAT…RRLV), 237 to 257 (IGKW…NLLG), and 262 to 282 (FYFI…YCVL).

It belongs to the glycosyltransferase 4 family. WecA subfamily. Requires Mg(2+) as cofactor. Mn(2+) serves as cofactor.

Its subcellular location is the cell membrane. The catalysed reaction is di-trans,octa-cis-undecaprenyl phosphate + UDP-N-acetyl-alpha-D-glucosamine = N-acetyl-alpha-D-glucosaminyl-di-trans,octa-cis-undecaprenyl diphosphate + UMP. The protein operates within cell wall biogenesis; cell wall polysaccharide biosynthesis. With respect to regulation, partially inhibited by magnesium at concentration higher than 10 mM and totally inhibited at concentration higher than 250 mM. Also inhibited by tunicamycin, NaCl and KCl. Functionally, catalyzes the transfer of the GlcNAc-1-phosphate moiety from UDP-GlcNAc onto the carrier lipid undecaprenyl phosphate (C55-P), yielding GlcNAc-pyrophosphoryl-undecaprenyl (GlcNAc-PP-C55), the lipid intermediate involved in the synthesis of various bacterial cell envelope components. The enzyme is highly active when tested with C35-P, instead of its natural C55-P lipid substrate, suggesting that at least a 35-carbon chain is required for the lipid to be a substrate of WecA. This is Undecaprenyl-phosphate alpha-N-acetylglucosaminyl 1-phosphate transferase (wecA) from Thermotoga maritima (strain ATCC 43589 / DSM 3109 / JCM 10099 / NBRC 100826 / MSB8).